The sequence spans 587 residues: Aspartate--tRNA ligase (587 aa).

Glu-175 lines the L-aspartate pocket. The segment at 199 to 202 is aspartate; that stretch reads QQFK. L-aspartate-binding residues include Arg-221 and His-446. An ATP-binding site is contributed by 221–223; sequence RDE. Residue Glu-480 coordinates ATP. Position 487 (Arg-487) interacts with L-aspartate. 532 to 535 is a binding site for ATP; sequence GVDR.

The protein belongs to the class-II aminoacyl-tRNA synthetase family. Type 1 subfamily. In terms of assembly, homodimer.

It localises to the cytoplasm. The catalysed reaction is tRNA(Asp) + L-aspartate + ATP = L-aspartyl-tRNA(Asp) + AMP + diphosphate. In terms of biological role, catalyzes the attachment of L-aspartate to tRNA(Asp) in a two-step reaction: L-aspartate is first activated by ATP to form Asp-AMP and then transferred to the acceptor end of tRNA(Asp). The polypeptide is Aspartate--tRNA ligase (Streptomyces avermitilis (strain ATCC 31267 / DSM 46492 / JCM 5070 / NBRC 14893 / NCIMB 12804 / NRRL 8165 / MA-4680)).